We begin with the raw amino-acid sequence, 525 residues long: Putative ankyrin repeat protein FPV228 (525 aa).

ANK repeat units follow at residues 39–71, 72–122, 123–152, 156–185, 190–226, 227–254, 258–287, 291–320, and 324–353; these read HPDN…TRDI, LGNT…ACNN, LNQT…KVNI, YGNT…DVNI, YWYS…TRCR, LNTT…DINA, NDNA…DVNM, RGKT…NPNI, and IMNT…DINH.

The polypeptide is Putative ankyrin repeat protein FPV228 (Fowlpox virus (strain NVSL) (FPV)).